The sequence spans 387 residues: Ferrochelatase (387 aa).

The Fe cation site is built by histidine 196 and glutamate 277.

It belongs to the ferrochelatase family.

It localises to the cytoplasm. It catalyses the reaction heme b + 2 H(+) = protoporphyrin IX + Fe(2+). It functions in the pathway porphyrin-containing compound metabolism; protoheme biosynthesis; protoheme from protoporphyrin-IX: step 1/1. Functionally, catalyzes the ferrous insertion into protoporphyrin IX. This chain is Ferrochelatase, found in Rippkaea orientalis (strain PCC 8801 / RF-1) (Cyanothece sp. (strain PCC 8801)).